The chain runs to 116 residues: Beta-2-microglobulin (116 aa).

Positions 1-19 are cleaved as a signal peptide; it reads MRAIITFALFCVLYITVQA. An Ig-like C1-type domain is found at 24 to 111; that stretch reads PKVQVYSHFP…RHMSNTNAYS (88 aa). Cys44 and Cys99 are joined by a disulfide.

Belongs to the beta-2-microglobulin family. As to quaternary structure, heterodimer of an alpha chain and a beta chain. Beta-2-microglobulin is the beta-chain of major histocompatibility complex class I molecules.

It localises to the secreted. Functionally, component of the class I major histocompatibility complex (MHC). Involved in the presentation of peptide antigens to the immune system. The protein is Beta-2-microglobulin (b2m) of Labeobarbus intermedius (Lake tana barbels).